A 60-amino-acid chain; its full sequence is Large ribosomal subunit protein uL30 (60 aa).

It belongs to the universal ribosomal protein uL30 family. As to quaternary structure, part of the 50S ribosomal subunit.

In Polaromonas naphthalenivorans (strain CJ2), this protein is Large ribosomal subunit protein uL30.